Here is a 443-residue protein sequence, read N- to C-terminus: 23S rRNA (uracil(1939)-C(5))-methyltransferase RlmD (443 aa).

Positions 4 to 66 (QNRFDRTSFQ…RHFDEARVVE (63 aa)) constitute a TRAM domain. Residues Cys79, Cys85, Cys88, and Cys167 each contribute to the [4Fe-4S] cluster site. S-adenosyl-L-methionine contacts are provided by Gln275, Phe304, Asn309, Glu325, Asp352, and Asp373. The Nucleophile role is filled by Cys399.

Belongs to the class I-like SAM-binding methyltransferase superfamily. RNA M5U methyltransferase family. RlmD subfamily.

It catalyses the reaction uridine(1939) in 23S rRNA + S-adenosyl-L-methionine = 5-methyluridine(1939) in 23S rRNA + S-adenosyl-L-homocysteine + H(+). Its function is as follows. Catalyzes the formation of 5-methyl-uridine at position 1939 (m5U1939) in 23S rRNA. This is 23S rRNA (uracil(1939)-C(5))-methyltransferase RlmD from Xylella fastidiosa (strain Temecula1 / ATCC 700964).